We begin with the raw amino-acid sequence, 1578 residues long: BRD4-interacting chromatin-remodeling complex-associated protein (1578 aa).

Disordered regions lie at residues 80–101 (DILGSPAAGGGGGGGGAPDQPC), 631–673 (PAVT…PSLA), and 725–951 (IVSA…PPPR). The segment covering 86-96 (AAGGGGGGGGA) has biased composition (gly residues). Composition is skewed to low complexity over residues 631 to 662 (PAVTTPLPMGLQQPQAQQPPQVPTPQAATQPQ) and 764 to 782 (IPAAAPLKAPGPASSPSLP). Pro residues-rich tracts occupy residues 793–816 (MPSPHPARPPSRPPSRPHSRPPSQ), 824–841 (PSEPTLHPCPPPQGPPTL), and 865–888 (PGPPQPPLRPPSQPPEGPLPPASH). Over residues 889–906 (LPPASTPSAVASSSEPSA) the composition is skewed to low complexity. Phosphoserine is present on S929. A Phosphothreonine modification is found at T931. Residues 942–951 (PTAPPPPPPR) show a composition bias toward pro residues. Residue K1067 is modified to N6-acetyllysine. The segment at 1206–1316 (EKPDEYVSSS…NRPPIKTYEA (111 aa)) is disordered. Composition is skewed to low complexity over residues 1233–1247 (SHGQSSSSSTSGTSA) and 1275–1294 (ASSSLSSTSSSSSSSSAASS). K1327 participates in a covalent cross-link: Glycyl lysine isopeptide (Lys-Gly) (interchain with G-Cter in SUMO2). Disordered regions lie at residues 1342 to 1435 (DPVH…PTKV) and 1457 to 1578 (VLKG…TLNR). Residues 1346–1370 (QPLPAPTPAKGAEPPPHPAPPPLPP) are compositionally biased toward pro residues. A Phosphoserine modification is found at S1427. A compositionally biased stretch (polar residues) spans 1502–1532 (ASFSSDSPQDDTLTEHLQSAIDSILNLQQAP). Positions 1538-1553 (GPYPHTGPTPGTPTSP) are enriched in pro residues.

In terms of assembly, component of the multiprotein chromatin-remodeling complexes SWI/SNF: SWI/SNF-A (BAF), SWI/SNF-B (PBAF) and related complexes. The canonical complex contains a catalytic subunit (either SMARCA4/BRG1/BAF190A or SMARCA2/BRM/BAF190B) and at least SMARCE1, ACTL6A/BAF53, SMARCC1/BAF155, SMARCC2/BAF170, and SMARCB1/SNF5/BAF47. Other subunits specific to each of the complexes may also be present permitting several possible combinations developmentally and tissue specific. Component of the SWI/SNF (GBAF) subcomplex, which includes at least BICRA or BICRAL (mutually exclusive), BRD9, SS18, the core BAF subunits, SMARCA2/BRM, SMARCA4/BRG1/BAF190A, ACTL6A/BAF53, SMARCC1/BAF155, and SMARCD1/BAF60A. Interacts with BRD4; the interaction bridges BRD4 to the GBAF complex.

The protein localises to the nucleus. In terms of biological role, component of SWI/SNF chromatin remodeling subcomplex GBAF that carries out key enzymatic activities, changing chromatin structure by altering DNA-histone contacts within a nucleosome in an ATP-dependent manner. May play a role in BRD4-mediated gene transcription. The polypeptide is BRD4-interacting chromatin-remodeling complex-associated protein (Mus musculus (Mouse)).